A 190-amino-acid chain; its full sequence is Recombination protein RecR (190 aa).

Residues 58–73 form a C4-type zinc finger; that stretch reads CEQCGALSENELCEIC. The Toprim domain maps to 81 to 167; that stretch reads NILCIVESPK…TFSKIAQGIP (87 aa).

It belongs to the RecR family.

Its function is as follows. May play a role in DNA repair. It seems to be involved in an RecBC-independent recombinational process of DNA repair. It may act with RecF and RecO. This Campylobacter jejuni subsp. doylei (strain ATCC BAA-1458 / RM4099 / 269.97) protein is Recombination protein RecR.